A 372-amino-acid polypeptide reads, in one-letter code: NAD(P)H-quinone oxidoreductase subunit 1 (372 aa).

8 helical membrane passes run 27–47 (IIWLPLPMLLVLVAAVVGVLV), 97–117 (ILFTAGPILVLVPVILSWLIV), 128–148 (VGIGIFLWIALSSIQPIGLLM), 176–196 (LALSVLAIVLMTNSLSTIDIV), 204–224 (ILSWNIWRQPVGFIVFWICAL), 266–286 (ILSALLVSILYLGGWGFPIPV), 308–328 (SIGIVMTVLKAYLLVFIAILL), and 347–367 (FLLPISLANLLITAGLKLAFP).

It belongs to the complex I subunit 1 family. In terms of assembly, NDH-1 is composed of at least 11 different subunits.

The protein resides in the cellular thylakoid membrane. It catalyses the reaction a plastoquinone + NADH + (n+1) H(+)(in) = a plastoquinol + NAD(+) + n H(+)(out). The enzyme catalyses a plastoquinone + NADPH + (n+1) H(+)(in) = a plastoquinol + NADP(+) + n H(+)(out). In terms of biological role, NDH-1 shuttles electrons from an unknown electron donor, via FMN and iron-sulfur (Fe-S) centers, to quinones in the respiratory and/or the photosynthetic chain. The immediate electron acceptor for the enzyme in this species is believed to be plastoquinone. Couples the redox reaction to proton translocation, and thus conserves the redox energy in a proton gradient. The protein is NAD(P)H-quinone oxidoreductase subunit 1 of Prochlorococcus marinus (strain MIT 9301).